Here is a 102-residue protein sequence, read N- to C-terminus: Large ribosomal subunit protein bL21 (102 aa).

It belongs to the bacterial ribosomal protein bL21 family. As to quaternary structure, part of the 50S ribosomal subunit. Contacts protein L20.

In terms of biological role, this protein binds to 23S rRNA in the presence of protein L20. The sequence is that of Large ribosomal subunit protein bL21 from Leptospira biflexa serovar Patoc (strain Patoc 1 / Ames).